The sequence spans 614 residues: UvrABC system protein C (614 aa).

Residues 16–94 (SRPGVYRMFG…VKSLKPRFNV (79 aa)) form the GIY-YIG domain. One can recognise a UVR domain in the interval 204–239 (GELQKRLASEMEAASEAMEFETAARLRDRIRAIAHV).

It belongs to the UvrC family. As to quaternary structure, interacts with UvrB in an incision complex.

It localises to the cytoplasm. Functionally, the UvrABC repair system catalyzes the recognition and processing of DNA lesions. UvrC both incises the 5' and 3' sides of the lesion. The N-terminal half is responsible for the 3' incision and the C-terminal half is responsible for the 5' incision. The sequence is that of UvrABC system protein C from Hyphomonas neptunium (strain ATCC 15444).